A 308-amino-acid chain; its full sequence is UPF0282 protein STK_23220 (308 aa).

Belongs to the UPF0282 family.

This is UPF0282 protein STK_23220 from Sulfurisphaera tokodaii (strain DSM 16993 / JCM 10545 / NBRC 100140 / 7) (Sulfolobus tokodaii).